The chain runs to 178 residues: N-alpha-acetyltransferase 20 (178 aa).

In terms of domain architecture, N-acetyltransferase spans 2–157; it reads TTLRAFTCDD…DAYDMRKALS (156 aa). Positions 159 to 178 are disordered; the sequence is DTEKKSIVPLPHPVRPEDIE.

The protein belongs to the acetyltransferase family. ARD1 subfamily. As to quaternary structure, component of the N-terminal acetyltransferase B (NatB) complex which is composed of naa20 and naa25.

The protein resides in the cytoplasm. It localises to the nucleus. The catalysed reaction is N-terminal L-methionyl-L-asparaginyl-[protein] + acetyl-CoA = N-terminal N(alpha)-acetyl-L-methionyl-L-asparaginyl-[protein] + CoA + H(+). It catalyses the reaction N-terminal L-methionyl-L-glutaminyl-[protein] + acetyl-CoA = N-terminal N(alpha)-acetyl-L-methionyl-L-glutaminyl-[protein] + CoA + H(+). It carries out the reaction N-terminal L-methionyl-L-aspartyl-[protein] + acetyl-CoA = N-terminal N(alpha)-acetyl-L-methionyl-L-aspartyl-[protein] + CoA + H(+). The enzyme catalyses N-terminal L-methionyl-L-glutamyl-[protein] + acetyl-CoA = N-terminal N(alpha)-acetyl-L-methionyl-L-glutamyl-[protein] + CoA + H(+). In terms of biological role, catalytic subunit of the NatB complex which catalyzes acetylation of the N-terminal methionine residues of peptides beginning with Met-Asp, Met-Glu, Met-Asn and Met-Gln. Proteins with cell cycle functions are overrepresented in the pool of NatB substrates. Required for maintaining the structure and function of actomyosin fibers and for proper cellular migration. The chain is N-alpha-acetyltransferase 20 (naa20) from Xenopus laevis (African clawed frog).